The primary structure comprises 157 residues: Small ribosomal subunit protein uS7 (157 aa).

It belongs to the universal ribosomal protein uS7 family. In terms of assembly, part of the 30S ribosomal subunit. Contacts proteins S9 and S11.

Its function is as follows. One of the primary rRNA binding proteins, it binds directly to 16S rRNA where it nucleates assembly of the head domain of the 30S subunit. Is located at the subunit interface close to the decoding center, probably blocks exit of the E-site tRNA. The sequence is that of Small ribosomal subunit protein uS7 from Chloroflexus aggregans (strain MD-66 / DSM 9485).